Here is a 140-residue protein sequence, read N- to C-terminus: Large ribosomal subunit protein uL11 (140 aa).

It belongs to the universal ribosomal protein uL11 family. In terms of assembly, part of the ribosomal stalk of the 50S ribosomal subunit. Interacts with L10 and the large rRNA to form the base of the stalk. L10 forms an elongated spine to which L12 dimers bind in a sequential fashion forming a multimeric L10(L12)X complex. One or more lysine residues are methylated.

Functionally, forms part of the ribosomal stalk which helps the ribosome interact with GTP-bound translation factors. This is Large ribosomal subunit protein uL11 from Heliobacterium modesticaldum (strain ATCC 51547 / Ice1).